A 251-amino-acid chain; its full sequence is Ubiquinone/menaquinone biosynthesis C-methyltransferase UbiE (251 aa).

Residues T74, D95, and 123–124 (NA) each bind S-adenosyl-L-methionine.

Belongs to the class I-like SAM-binding methyltransferase superfamily. MenG/UbiE family.

The enzyme catalyses a 2-demethylmenaquinol + S-adenosyl-L-methionine = a menaquinol + S-adenosyl-L-homocysteine + H(+). The catalysed reaction is a 2-methoxy-6-(all-trans-polyprenyl)benzene-1,4-diol + S-adenosyl-L-methionine = a 5-methoxy-2-methyl-3-(all-trans-polyprenyl)benzene-1,4-diol + S-adenosyl-L-homocysteine + H(+). The protein operates within quinol/quinone metabolism; menaquinone biosynthesis; menaquinol from 1,4-dihydroxy-2-naphthoate: step 2/2. Its pathway is cofactor biosynthesis; ubiquinone biosynthesis. In terms of biological role, methyltransferase required for the conversion of demethylmenaquinol (DMKH2) to menaquinol (MKH2) and the conversion of 2-polyprenyl-6-methoxy-1,4-benzoquinol (DDMQH2) to 2-polyprenyl-3-methyl-6-methoxy-1,4-benzoquinol (DMQH2). This Shewanella frigidimarina (strain NCIMB 400) protein is Ubiquinone/menaquinone biosynthesis C-methyltransferase UbiE.